Reading from the N-terminus, the 427-residue chain is Trigger factor (427 aa).

Residues 163-248 (GDIVVIDFAG…LKEIKRKELA (86 aa)) enclose the PPIase FKBP-type domain.

The protein belongs to the FKBP-type PPIase family. Tig subfamily.

It localises to the cytoplasm. It carries out the reaction [protein]-peptidylproline (omega=180) = [protein]-peptidylproline (omega=0). Involved in protein export. Acts as a chaperone by maintaining the newly synthesized protein in an open conformation. Functions as a peptidyl-prolyl cis-trans isomerase. The sequence is that of Trigger factor from Carboxydothermus hydrogenoformans (strain ATCC BAA-161 / DSM 6008 / Z-2901).